Here is a 314-residue protein sequence, read N- to C-terminus: D-alanine--D-alanine ligase (314 aa).

The ATP-grasp domain maps to 115-310 (KQVWQSVGLV…FNELVLEILA (196 aa)). ATP is bound at residue 141-196 (LDSLGGQGFVKPAHEGSSIGMSVVSTAQELKAAYEKAAHYDAKVLVERRIVGREFT). Residues aspartate 264, glutamate 277, and asparagine 279 each coordinate Mg(2+).

This sequence belongs to the D-alanine--D-alanine ligase family. Mg(2+) is required as a cofactor. Mn(2+) serves as cofactor.

The protein resides in the cytoplasm. The enzyme catalyses 2 D-alanine + ATP = D-alanyl-D-alanine + ADP + phosphate + H(+). The protein operates within cell wall biogenesis; peptidoglycan biosynthesis. Its function is as follows. Cell wall formation. The chain is D-alanine--D-alanine ligase from Saccharophagus degradans (strain 2-40 / ATCC 43961 / DSM 17024).